We begin with the raw amino-acid sequence, 178 residues long: Interleukin-10 (178 aa).

The signal sequence occupies residues 1–18 (MHSSALLCCLVLLTGVRA). 2 cysteine pairs are disulfide-bonded: C30-C126 and C80-C132. N134 carries an N-linked (GlcNAc...) asparagine glycan.

The protein belongs to the IL-10 family. In terms of assembly, homodimer. Interacts with IL10RA and IL10RB.

It is found in the secreted. Functionally, major immune regulatory cytokine that acts on many cells of the immune system where it has profound anti-inflammatory functions, limiting excessive tissue disruption caused by inflammation. Mechanistically, IL10 binds to its heterotetrameric receptor comprising IL10RA and IL10RB leading to JAK1 and STAT2-mediated phosphorylation of STAT3. In turn, STAT3 translocates to the nucleus where it drives expression of anti-inflammatory mediators. Targets antigen-presenting cells (APCs) such as macrophages and monocytes and inhibits their release of pro-inflammatory cytokines including granulocyte-macrophage colony-stimulating factor /GM-CSF, granulocyte colony-stimulating factor/G-CSF, IL-1 alpha, IL-1 beta, IL-6, IL-8 and TNF-alpha. Also interferes with antigen presentation by reducing the expression of MHC-class II and co-stimulatory molecules, thereby inhibiting their ability to induce T cell activation. In addition, controls the inflammatory response of macrophages by reprogramming essential metabolic pathways including mTOR signaling. This Macaca mulatta (Rhesus macaque) protein is Interleukin-10 (IL10).